The primary structure comprises 379 residues: Early boundary activity protein 3 (379 aa).

As to quaternary structure, the heterotrimeric Elba complex consists of Elba1, Elba2 and Elba3.

It localises to the nucleus. In terms of biological role, the heterotrimeric Elba complex is required for chromatin domain boundary function during early embryogenesis. It binds to a 8-bp sequence 5'-CCAATAAG-3' in the Fab-7 insulator or boundary element in the bithorax complex and contributes to its insulator or boundary activity. Elba3 lacks DNA-binding activity and plays the role of an adapter protein, bringing Elba1 and 2 together, thereby establishing a complex that recognizes the asymmetric sequence motif through the BEN domains of Elba1 and 2. The polypeptide is Early boundary activity protein 3 (Drosophila melanogaster (Fruit fly)).